Here is a 178-residue protein sequence, read N- to C-terminus: ATP-dependent protease subunit HslV (178 aa).

T7 is a catalytic residue. Residues G162, C165, and T168 each contribute to the Na(+) site.

This sequence belongs to the peptidase T1B family. HslV subfamily. As to quaternary structure, a double ring-shaped homohexamer of HslV is capped on each side by a ring-shaped HslU homohexamer. The assembly of the HslU/HslV complex is dependent on binding of ATP.

It localises to the cytoplasm. It carries out the reaction ATP-dependent cleavage of peptide bonds with broad specificity.. Its activity is regulated as follows. Allosterically activated by HslU binding. In terms of biological role, protease subunit of a proteasome-like degradation complex believed to be a general protein degrading machinery. This is ATP-dependent protease subunit HslV from Ralstonia nicotianae (strain ATCC BAA-1114 / GMI1000) (Ralstonia solanacearum).